Reading from the N-terminus, the 572-residue chain is Mitochondrial distribution and morphology protein 34 (572 aa).

The SMP-LTD domain occupies 1–195; the sequence is MAFNFNWSPL…LPAIIHRLSL (195 aa). 3 disordered regions span residues 210–239, 330–423, and 455–482; these read TQAE…VDAL, SASI…PLSP, and RDMG…TPRA. Residues 330–347 show a composition bias toward polar residues; it reads SASIASMQTRSSTPSHTF. Residues 358–370 are compositionally biased toward basic residues; it reads RHSKAHSRKRKKR. Basic and acidic residues predominate over residues 371–381; that stretch reads VVDLRRPKTTD. Composition is skewed to polar residues over residues 387–400 and 460–480; these read SDES…SAPS and PSST…SATP.

This sequence belongs to the MDM34 family. In terms of assembly, component of the ER-mitochondria encounter structure (ERMES) or MDM complex, composed of mmm1, mdm10, mdm12 and mdm34.

Its subcellular location is the mitochondrion outer membrane. Functionally, component of the ERMES/MDM complex, which serves as a molecular tether to connect the endoplasmic reticulum (ER) and mitochondria. Components of this complex are involved in the control of mitochondrial shape and protein biogenesis, and function in nonvesicular lipid trafficking between the ER and mitochondria. Mdm34 is required for the interaction of the ER-resident membrane protein mmm1 and the outer mitochondrial membrane-resident beta-barrel protein mdm10. The polypeptide is Mitochondrial distribution and morphology protein 34 (Aspergillus clavatus (strain ATCC 1007 / CBS 513.65 / DSM 816 / NCTC 3887 / NRRL 1 / QM 1276 / 107)).